A 461-amino-acid chain; its full sequence is Coronin-1A (461 aa).

Ser2 carries the N-acetylserine modification. Ser2 bears the Phosphoserine; by PKC mark. WD repeat units follow at residues 13-63, 73-110, 123-160, 164-204, 207-251, 258-296, and 302-349; these read HVFG…LVLP, NVPMVCGHTAPVLDIAWCPHNDNVIASGSEDCSVMVWE, PVVTLEGHTKRVGIVAWHPTAQNVLLSAGCDNVILVWD, GVAV…RIIE, KGTI…ALWD, PLSLQELDTSSGVLLPFFDPDTNIVYLCGKGDSSIRYFE, and PFLH…EPIA. Residues 404–418 show a composition bias toward basic and acidic residues; sequence LRVNRGLDTGRKRTT. A disordered region spans residues 404–429; sequence LRVNRGLDTGRKRTTPEASGAPSSDA. A Phosphothreonine; by PKC modification is found at Thr412. Phosphothreonine is present on Thr418. Ser422 carries the phosphoserine modification. Positions 424–460 form a coiled coil; it reads APSSDAISRLEEEMRKLQATVQELQKRLDRLEETVQA. N6-acetyllysine is present on Lys449.

It belongs to the WD repeat coronin family. Binds actin. Phosphorylation at Thr-412 by PKC strongly down-regulates the association with actin. Post-translationally, polyubiquitinated by RNF128 with 'Lys-48'-linked chains, leading to proteasomal degradation. As to expression, expressed in brain, thymus, spleen, bone marrow and lymph node. Low in lung and gut.

Its subcellular location is the cytoplasm. It is found in the cytoskeleton. The protein resides in the cell cortex. The protein localises to the cytoplasmic vesicle. It localises to the phagosome membrane. Functionally, may be a crucial component of the cytoskeleton of highly motile cells, functioning both in the invagination of large pieces of plasma membrane, as well as in forming protrusions of the plasma membrane involved in cell locomotion. In mycobacteria-infected macrophages, its retention on the phagosomal membrane prevents fusion between phagosomes and lysosomes. This chain is Coronin-1A (CORO1A), found in Bos taurus (Bovine).